The primary structure comprises 418 residues: Tektin-1 (418 aa).

4 coiled-coil regions span residues 21–107 (KNQY…TLKE), 134–177 (HELI…DLKD), 266–308 (NGLK…DQEG), and 333–384 (AQYR…NTIY).

It belongs to the tektin family. In terms of assembly, microtubule inner protein component of sperm flagellar doublet microtubules. Post-translationally, ubiquitinated, leading to its degradation. Deubiquitinated by USP16, promoting its stability. As to expression, predominantly expressed in testis. Expressed in airway epithelial cells.

Its subcellular location is the cytoplasm. The protein localises to the cytoskeleton. It is found in the cilium axoneme. The protein resides in the flagellum axoneme. Functionally, microtubule inner protein (MIP) part of the dynein-decorated doublet microtubules (DMTs) in cilia and flagellar axoneme. Forms filamentous polymers in the walls of ciliary and flagellar microtubules. The protein is Tektin-1 (TEKT1) of Homo sapiens (Human).